Reading from the N-terminus, the 217-residue chain is Urease accessory protein UreG (217 aa).

A compositionally biased stretch (basic residues) spans M1 to P18. The tract at residues M1–V24 is disordered. G26 to T33 is a binding site for GTP.

The protein belongs to the SIMIBI class G3E GTPase family. UreG subfamily. Homodimer. UreD, UreF and UreG form a complex that acts as a GTP-hydrolysis-dependent molecular chaperone, activating the urease apoprotein by helping to assemble the nickel containing metallocenter of UreC. The UreE protein probably delivers the nickel.

The protein resides in the cytoplasm. Facilitates the functional incorporation of the urease nickel metallocenter. This process requires GTP hydrolysis, probably effectuated by UreG. In Paraburkholderia xenovorans (strain LB400), this protein is Urease accessory protein UreG.